Here is a 458-residue protein sequence, read N- to C-terminus: ATP synthase subunit beta (458 aa).

148–155 (GGAGVGKT) serves as a coordination point for ATP.

This sequence belongs to the ATPase alpha/beta chains family. F-type ATPases have 2 components, CF(1) - the catalytic core - and CF(0) - the membrane proton channel. CF(1) has five subunits: alpha(3), beta(3), gamma(1), delta(1), epsilon(1). CF(0) has three main subunits: a(1), b(2) and c(9-12). The alpha and beta chains form an alternating ring which encloses part of the gamma chain. CF(1) is attached to CF(0) by a central stalk formed by the gamma and epsilon chains, while a peripheral stalk is formed by the delta and b chains.

The protein resides in the cell inner membrane. It carries out the reaction ATP + H2O + 4 H(+)(in) = ADP + phosphate + 5 H(+)(out). Produces ATP from ADP in the presence of a proton gradient across the membrane. The catalytic sites are hosted primarily by the beta subunits. This chain is ATP synthase subunit beta, found in Pseudomonas aeruginosa (strain LESB58).